Consider the following 98-residue polypeptide: N(2)-fixation sustaining protein CowN (98 aa).

This sequence belongs to the CowN family.

Is required to sustain N(2)-dependent growth in the presence of low levels of carbon monoxide (CO). Probably acts by protecting the N(2) fixation ability of the nitrogenase complex, which is inactivated in the presence of CO. This is N(2)-fixation sustaining protein CowN from Azospirillum sp. (strain B510).